The sequence spans 335 residues: Glycerol-3-phosphate dehydrogenase [NAD(P)+] (335 aa).

The NADPH site is built by S10, F11, R31, and K105. Sn-glycerol 3-phosphate contacts are provided by K105, G136, and S138. An NADPH-binding site is contributed by A140. Sn-glycerol 3-phosphate-binding residues include K191, D244, S254, R255, and N256. K191 (proton acceptor) is an active-site residue. R255 contacts NADPH. 2 residues coordinate NADPH: V279 and E281.

This sequence belongs to the NAD-dependent glycerol-3-phosphate dehydrogenase family.

It localises to the cytoplasm. The enzyme catalyses sn-glycerol 3-phosphate + NAD(+) = dihydroxyacetone phosphate + NADH + H(+). It carries out the reaction sn-glycerol 3-phosphate + NADP(+) = dihydroxyacetone phosphate + NADPH + H(+). It participates in membrane lipid metabolism; glycerophospholipid metabolism. In terms of biological role, catalyzes the reduction of the glycolytic intermediate dihydroxyacetone phosphate (DHAP) to sn-glycerol 3-phosphate (G3P), the key precursor for phospholipid synthesis. The chain is Glycerol-3-phosphate dehydrogenase [NAD(P)+] from Leptospira borgpetersenii serovar Hardjo-bovis (strain JB197).